The sequence spans 484 residues: Transcription factor cghD (484 aa).

Positions 21 to 54 (CDRCRLQKLKCTVQSMESDGRMVCERCVRAKVPC) form a DNA-binding region, zn(2)-C6 fungal-type. Disordered regions lie at residues 59 to 117 (RRRA…PTLA), 136 to 174 (TTAPTYSYHHHHHDSYQLGEGPPTPFPNPATTGGGSGSS), 202 to 242 (PAST…FSTT), and 386 to 406 (HMHSTPAPTTSPTLQLGELPS). The span at 64–76 (RPSDTKKQGDSST) shows a compositional bias: basic and acidic residues. Positions 77–107 (RRSTAPRTTNPEPTVLTPPLSTTSSTSEQTL) are enriched in low complexity. Low complexity predominate over residues 202–213 (PASTSTSTGSPT).

Its subcellular location is the nucleus. Functionally, transcription factor that regulates the expression of the gene cluster that mediates the biosynthesis of the tetramic acid Sch210972, a potential anti-HIV fungal natural product that contains a decalin core. The polypeptide is Transcription factor cghD (Chaetomium globosum (strain ATCC 6205 / CBS 148.51 / DSM 1962 / NBRC 6347 / NRRL 1970) (Soil fungus)).